A 104-amino-acid polypeptide reads, in one-letter code: UPF0145 protein NP_2600A (104 aa).

The protein belongs to the UPF0145 family.

In Natronomonas pharaonis (strain ATCC 35678 / DSM 2160 / CIP 103997 / JCM 8858 / NBRC 14720 / NCIMB 2260 / Gabara) (Halobacterium pharaonis), this protein is UPF0145 protein NP_2600A.